Consider the following 353-residue polypeptide: MTIALGKFTKDEKDLFDIMDDWLRRDRFVFVGWSGLLLFPCAYFALGGWFTGTTFVTSWYTHGLASSYLEGCNFLTAAVSTPANSLAHSLLLLWGPEAQGDFTRWCQLGGLWAFVALHGAFALIGFMLRQFELARSVQLRPYNAIAFSGPIAVFVSVFLIYPLGQSGWFFAPSFGVAAIFRFILFFQGFHNWTLNPFHMMGVAGVLGAALLCAIHGATVENTLFEDGDGANTFRAFNPTQAEETYSMVTANRFWSQIFGVAFSNKRWLHFFMLFVPVTGLWMSALGVVGLALNLRAYDFVSQEIRAAEDPEFETFYTKNILLNEGIRAWMAAQDQPHENLIFPEEVLPRGNAL.

N-acetylthreonine is present on Thr-2. At Thr-2 the chain carries Phosphothreonine. A helical membrane pass occupies residues 41 to 61 (CAYFALGGWFTGTTFVTSWYT). A chlorophyll a-binding site is contributed by His-118. Residues 125-141 (GFMLRQFELARSVQLRP) traverse the membrane as a helical segment. Residues Gln-130 and Asn-143 each coordinate pheophytin a. Residues 153 to 166 (VFVSVFLIYPLGQS) form a helical membrane-spanning segment. Residue His-198 coordinates chlorophyll a. Residues 208–228 (AALLCAIHGATVENTLFEDGD) traverse the membrane as a helical segment. His-215 and Phe-262 together coordinate a plastoquinone. A Fe cation-binding site is contributed by His-215. His-269 is a Fe cation binding site. The helical transmembrane segment at 279-295 (GLWMSALGVVGLALNLR) threads the bilayer.

This sequence belongs to the reaction center PufL/M/PsbA/D family. In terms of assembly, PSII is composed of 1 copy each of membrane proteins PsbA, PsbB, PsbC, PsbD, PsbE, PsbF, PsbH, PsbI, PsbJ, PsbK, PsbL, PsbM, PsbT, PsbX, PsbY, PsbZ, Psb30/Ycf12, at least 3 peripheral proteins of the oxygen-evolving complex and a large number of cofactors. It forms dimeric complexes. Interacts with PAM68. It depends on The D1/D2 heterodimer binds P680, chlorophylls that are the primary electron donor of PSII, and subsequent electron acceptors. It shares a non-heme iron and each subunit binds pheophytin, quinone, additional chlorophylls, carotenoids and lipids. There is also a Cl(-1) ion associated with D1 and D2, which is required for oxygen evolution. The PSII complex binds additional chlorophylls, carotenoids and specific lipids. as a cofactor. In terms of processing, phosphorylation occurs in normal plant growth light conditions. Rapid dephosphorylation occurs during heat shock.

The protein resides in the plastid. The protein localises to the chloroplast thylakoid membrane. The catalysed reaction is 2 a plastoquinone + 4 hnu + 2 H2O = 2 a plastoquinol + O2. Its function is as follows. Photosystem II (PSII) is a light-driven water:plastoquinone oxidoreductase that uses light energy to abstract electrons from H(2)O, generating O(2) and a proton gradient subsequently used for ATP formation. It consists of a core antenna complex that captures photons, and an electron transfer chain that converts photonic excitation into a charge separation. The D1/D2 (PsbA/PsbD) reaction center heterodimer binds P680, the primary electron donor of PSII as well as several subsequent electron acceptors. D2 is needed for assembly of a stable PSII complex. This chain is Photosystem II D2 protein, found in Arabidopsis thaliana (Mouse-ear cress).